Reading from the N-terminus, the 317-residue chain is Zinc metalloproteinase/disintegrin (317 aa).

A propeptide spanning residues 1-26 (EAPKMCGVTQNWESYEPIKKASQSNL) is cleaved from the precursor. The Peptidase M12B domain occupies 32 to 228 (RYIELVIVAD…QKPQCILNKP (197 aa)). 2 residues coordinate Ca(2+): E35 and D119. Disulfide bonds link C143–C223, C183–C207, and C185–C190. H168 provides a ligand contact to Zn(2+). Residue E169 is part of the active site. Positions 172 and 178 each coordinate Zn(2+). C223 and N226 together coordinate Ca(2+). A propeptide spanning residues 229–244 (LRTDTVSTPVSGNELL) is cleaved from the precursor. One can recognise a Disintegrin domain in the interval 236–317 (TPVSGNELLE…AGCPRNPFHA (82 aa)). Cystine bridges form between C250–C259, C252–C260, C265–C279, C273–C303, C278–C282, and C291–C310. The Cell attachment site signature appears at 295–297 (RGD).

The protein belongs to the venom metalloproteinase (M12B) family. P-II subfamily. P-IIa sub-subfamily. In terms of assembly, monomer. It depends on Zn(2+) as a cofactor. In terms of tissue distribution, expressed by the venom gland.

Its subcellular location is the secreted. In terms of biological role, metalloproteinase that impairs hemostasis in the envenomed animal. Inhibits GPIIb/GPIIIa (ITGA2B/ITGB3) binding to immobilized fibrinogen with an IC(50) of 2.2 nM and ADP-induced platelet aggregation with an IC(50) of 131 nM, respectively. Inhibits angiogenesis. By binding to vitronectin receptor (alpha-V/beta-3 (ITGAV/ITGB3)), also induces apoptosis of endothelial cells by blocking their attachment to extracellular matrix proteins. Its function is as follows. Inhibits platelet aggregation induced by ADP (IC(50) is 30 nM), collagen (IC(50) is 500 nM), thrombin and epinephrin (IC(50) is 160 nM). The chain is Zinc metalloproteinase/disintegrin from Gloydius brevicauda (Korean slamosa snake).